The following is a 427-amino-acid chain: O-methyltransferase sol2 (427 aa).

Position 281 (D281) interacts with S-adenosyl-L-methionine. The Proton acceptor role is filled by H327.

It belongs to the class I-like SAM-binding methyltransferase superfamily. Cation-independent O-methyltransferase family. COMT subfamily.

Its pathway is phytotoxin biosynthesis. In terms of biological role, O-methyltransferase; part of the gene cluster that mediates the biosynthesis of the phytotoxin solanapyrone, a causal agent of early blight disease of potato and tomato. The prosolanapyrone synthase sol1 is a polyketide synthase that produces the octaketide desmethylprosolanapyrone I via sequential condensations of 7 malonyl-CoA units with one acetyl-CoA unit, and one methylation step. The octaketide backbone is further methylated by the sol2 O-methyltransferase to yield prosolanapyrone I. Prosolanapyrone I is hydroxylated to prosolanapyrone II by the cytochrome P450 monooxygenase sol6. The solanapyrone synthase sol5 then catalyzes the oxidation of prosolanapyrone II and the subsequent Diels Alder cycloisomerization of the product prosolanapyrone III to solanapyrones A and D. Solanapyrones A and D are then converted into solanapyrones B and E, respectively, by the sol3 dehydrogenase. In Alternaria solani, this protein is O-methyltransferase sol2 (sol2).